Reading from the N-terminus, the 270-residue chain is Urease accessory protein UreD (270 aa).

Belongs to the UreD family. As to quaternary structure, ureD, UreF and UreG form a complex that acts as a GTP-hydrolysis-dependent molecular chaperone, activating the urease apoprotein by helping to assemble the nickel containing metallocenter of UreC. The UreE protein probably delivers the nickel.

It is found in the cytoplasm. Functionally, required for maturation of urease via the functional incorporation of the urease nickel metallocenter. The sequence is that of Urease accessory protein UreD from Beijerinckia indica subsp. indica (strain ATCC 9039 / DSM 1715 / NCIMB 8712).